A 329-amino-acid polypeptide reads, in one-letter code: 7,8-didemethyl-8-hydroxy-5-deazariboflavin synthase (329 aa).

The region spanning 6–244 (ITYTKNVFLP…EEISIQVAPN (239 aa)) is the Radical SAM core domain. [4Fe-4S] cluster contacts are provided by Cys20, Cys24, and Cys27.

Belongs to the radical SAM superfamily. CofG family. In terms of assembly, consists of two subunits, CofG and CofH. [4Fe-4S] cluster serves as cofactor.

It carries out the reaction 5-amino-5-(4-hydroxybenzyl)-6-(D-ribitylimino)-5,6-dihydrouracil + S-adenosyl-L-methionine = 7,8-didemethyl-8-hydroxy-5-deazariboflavin + 5'-deoxyadenosine + L-methionine + NH4(+) + H(+). Its pathway is cofactor biosynthesis; coenzyme F0 biosynthesis. Functionally, catalyzes the radical-mediated synthesis of 7,8-didemethyl-8-hydroxy-5-deazariboflavin from 5-amino-5-(4-hydroxybenzyl)-6-(D-ribitylimino)-5,6-dihydrouracil. The chain is 7,8-didemethyl-8-hydroxy-5-deazariboflavin synthase from Methanoregula boonei (strain DSM 21154 / JCM 14090 / 6A8).